The primary structure comprises 193 residues: A-type ATP synthase subunit E (193 aa).

It belongs to the V-ATPase E subunit family. As to quaternary structure, has multiple subunits with at least A(3), B(3), C, D, E, F, H, I and proteolipid K(x).

The protein resides in the cell membrane. Component of the A-type ATP synthase that produces ATP from ADP in the presence of a proton gradient across the membrane. In Haloquadratum walsbyi (strain DSM 16790 / HBSQ001), this protein is A-type ATP synthase subunit E.